Here is a 161-residue protein sequence, read N- to C-terminus: IVIPRTMEDLDLQKVAGTWHSMAMAASDISLLDSETAPLRVYIQELRPTPQDNLEIVLRKWEDNRCVEKKVFAEKTELAAXFSINYVEENQIFLLDTDYDNYLFFCMENANAPQQSLMCQCLARTLEVNNEVIGKFNRALKTLPVHMQLLNPTQVEEQCLV.

Cystine bridges form between Cys66–Cys159 and Cys106–Cys119.

This sequence belongs to the calycin superfamily. Lipocalin family. In terms of assembly, monomer. As to expression, synthesized in mammary gland and secreted in milk.

Its subcellular location is the secreted. In terms of biological role, primary component of whey, it binds retinol and is probably involved in the transport of that molecule. This is Beta-lactoglobulin-2 (LGB2) from Canis lupus familiaris (Dog).